The primary structure comprises 552 residues: Harmonin (552 aa).

An N-terminal domain region spans residues 1–86 (MDRKVAREFR…LTPRRSRKLK (86 aa)). PDZ domains follow at residues 87 to 169 (EVRL…HIGL) and 211 to 293 (KVFI…AAAG). The segment at 194–552 (GVRGSLGSPG…KEYDDELTFF (359 aa)) is mediates interaction with MYO7B. The residue at position 219 (serine 219) is a Phosphoserine. Positions 310–377 (RELQRQELLM…EKFKKQWEED (68 aa)) form a coiled coil. Positions 401-427 (KPKYDQGVEPELEPADDLDGGTEEQGE) are disordered. Residues 408 to 427 (VEPELEPADDLDGGTEEQGE) are compositionally biased toward acidic residues. Residues 452 to 537 (DVRLLRIKKE…QGGDWIDLVV (86 aa)) form the PDZ 3 domain.

In terms of assembly, part of the IMAC/intermicrovillar adhesion complex/intermicrovillar tip-link complex composed of ANKS4B, MYO7B, USH1C, CDHR2 and CDHR5. Part of a complex composed of USH1C, USH1G and MYO7A. Interacts with F-actin. Interacts with USH2A. Interacts with SLC4A7. Interacts (via PDZ1 domain) with the C-terminus of USHBP1. Interacts (via N-terminus and PDZ 2 domain) with CDH23. Interacts with USH1G. Interacts with MYO7B. Interacts with CDHR2 and CDHR5; may mediate their interaction with MYO7B at the microvilli tip. Interacts (via PDZ 1 domain) with ANKS4B. Interacts (via PDZ 1 domain) with DOCK4. As to expression, expressed in small intestine, colon, kidney, eye and weakly in pancreas. Expressed also in vestibule of the inner ear.

It localises to the cytoplasm. The protein localises to the cytosol. Its subcellular location is the cytoskeleton. The protein resides in the cell projection. It is found in the microvillus. Its function is as follows. Anchoring/scaffolding protein that is a part of the functional network formed by USH1C, USH1G, CDH23 and MYO7A that mediates mechanotransduction in cochlear hair cells. Required for normal development and maintenance of cochlear hair cell bundles. As part of the intermicrovillar adhesion complex/IMAC plays a role in brush border differentiation, controlling microvilli organization and length. Probably plays a central regulatory role in the assembly of the complex, recruiting CDHR2, CDHR5 and MYO7B to the microvilli tips. This is Harmonin (USH1C) from Homo sapiens (Human).